The primary structure comprises 1496 residues: Chromosome partition protein MukB (1496 aa).

Residue 63–70 participates in ATP binding; that stretch reads GGNGAGKS. Coiled coils occupy residues 328 to 493 and 536 to 632; these read KLEL…QRLS and KMQA…APAW. The flexible hinge stretch occupies residues 694–811; it reads PDGSDDVRLN…EVPLFGRAAR (118 aa). 2 coiled-coil regions span residues 861–1171 and 1235–1291; these read NPEE…SAEE and IDAI…LQNI. Over residues 1082–1091 the composition is skewed to basic and acidic residues; sequence RARSRRDELQ. Positions 1082-1101 are disordered; the sequence is RARSRRDELQQRLSQQRSRK.

Belongs to the SMC family. MukB subfamily. Homodimerization via its hinge domain. Binds to DNA via its C-terminal region. Interacts, and probably forms a ternary complex, with MukE and MukF via its C-terminal region. The complex formation is stimulated by calcium or magnesium. Interacts with tubulin-related protein FtsZ.

It is found in the cytoplasm. Its subcellular location is the nucleoid. Plays a central role in chromosome condensation, segregation and cell cycle progression. Functions as a homodimer, which is essential for chromosome partition. Involved in negative DNA supercoiling in vivo, and by this means organize and compact chromosomes. May achieve or facilitate chromosome segregation by condensation DNA from both sides of a centrally located replisome during cell division. This is Chromosome partition protein MukB from Actinobacillus pleuropneumoniae serotype 7 (strain AP76).